The primary structure comprises 267 residues: Phosphate import ATP-binding protein PstB (267 aa).

In terms of domain architecture, ABC transporter spans 21–262 (VAARNLDFYY…PSKQQTEDYI (242 aa)). 53–60 (GPSGCGKS) is a binding site for ATP.

This sequence belongs to the ABC transporter superfamily. Phosphate importer (TC 3.A.1.7) family. As to quaternary structure, the complex is composed of two ATP-binding proteins (PstB), two transmembrane proteins (PstC and PstA) and a solute-binding protein (PstS).

Its subcellular location is the cell inner membrane. The enzyme catalyses phosphate(out) + ATP + H2O = ADP + 2 phosphate(in) + H(+). In terms of biological role, part of the ABC transporter complex PstSACB involved in phosphate import. Responsible for energy coupling to the transport system. This Xanthomonas axonopodis pv. citri (strain 306) protein is Phosphate import ATP-binding protein PstB.